We begin with the raw amino-acid sequence, 41 residues long: Photosystem I reaction center subunit IX (41 aa).

Residues 7-27 (YLSTAPVLATLWFGLLAGILI) traverse the membrane as a helical segment.

Belongs to the PsaJ family.

It is found in the plastid. The protein localises to the chloroplast thylakoid membrane. Functionally, may help in the organization of the PsaE and PsaF subunits. The chain is Photosystem I reaction center subunit IX from Chara vulgaris (Common stonewort).